The following is a 161-amino-acid chain: Nucleotide-binding protein Dtpsy_2240 (161 aa).

Belongs to the YajQ family.

In terms of biological role, nucleotide-binding protein. This Acidovorax ebreus (strain TPSY) (Diaphorobacter sp. (strain TPSY)) protein is Nucleotide-binding protein Dtpsy_2240.